The chain runs to 549 residues: Vacuolar fusion protein MON1 homolog A (549 aa).

Disordered stretches follow at residues 1 to 90 and 109 to 137; these read MAAD…EQIS and EEMR…GKEE. Residues 110–119 show a composition bias toward basic and acidic residues; it reads EMRQSQEGKL.

The protein belongs to the MON1/SAND family.

Functionally, plays an important role in membrane trafficking through the secretory apparatus. Not involved in endocytic trafficking to lysosomes. The chain is Vacuolar fusion protein MON1 homolog A (MON1A) from Gallus gallus (Chicken).